The primary structure comprises 121 residues: C-type natriuretic peptide 4 (121 aa).

The N-terminal stretch at 1 to 22 (MNLSYLVACGLLVTFLSDKMDA) is a signal peptide. A propeptide spanning residues 23–96 (QPLTPAQQKS…SRRHKSGSKK (74 aa)) is cleaved from the precursor. A disordered region spans residues 80–109 (LLNDQPASRRHKSGSKKGGSTSRSGCFGHK). A disulfide bridge connects residues cysteine 105 and cysteine 121.

The protein belongs to the natriuretic peptide family. In terms of tissue distribution, brain, spinal cord, spleen, heart and fin, and to a lower extent in gill and ovary.

It localises to the secreted. Exhibits natriuretic and vasodepressant activity. Has cGMP-stimulating activity. May help to regulate body fluid homeostasis in a variety of aquatic environments. In Oryzias latipes (Japanese rice fish), this protein is C-type natriuretic peptide 4.